We begin with the raw amino-acid sequence, 669 residues long: Dynamin-related protein 4C (669 aa).

The disordered stretch occupies residues M1–K21. The 262-residue stretch at G62 to P323 folds into the Dynamin-type G domain. The interval G72–S79 is G1 motif. G72 to S79 contributes to the GTP binding site. The interval C97–R99 is G2 motif. Positions D171 to G174 are G3 motif. GTP-binding positions include D171–I175 and T240–D243. The interval T240–D243 is G4 motif. Residue E273 is a region of interest, G5 motif. The region spanning A575–C669 is the GED domain.

The protein belongs to the TRAFAC class dynamin-like GTPase superfamily. Dynamin/Fzo/YdjA family.

The protein localises to the cytoplasm. The protein resides in the cytoskeleton. Its function is as follows. Putative microtubule-associated force-producing protein, able to bind and hydrolyze GTP. In Arabidopsis thaliana (Mouse-ear cress), this protein is Dynamin-related protein 4C (DRP4C).